A 91-amino-acid polypeptide reads, in one-letter code: Small ribosomal subunit protein uS19 (91 aa).

Belongs to the universal ribosomal protein uS19 family.

In terms of biological role, protein S19 forms a complex with S13 that binds strongly to the 16S ribosomal RNA. This Delftia acidovorans (strain DSM 14801 / SPH-1) protein is Small ribosomal subunit protein uS19.